The chain runs to 555 residues: Transmembrane protein 87A (555 aa).

An N-terminal signal peptide occupies residues 1–21 (MAVAAWLQVSPVIFLLLGAQP). The Lumenal segment spans residues 22 to 225 (FPLSFLGAGP…YEYLTLEDYP (204 aa)). Intrachain disulfides connect C74-C128 and C89-C431. N-linked (GlcNAc...) asparagine glycosylation is found at N79, N157, and N160. A helical membrane pass occupies residues 226–246 (LMIFFMVMCIVYVLFGVLWLA). Residues 247-257 (WSACYWRDLLR) lie on the Cytoplasmic side of the membrane. Residues 258 to 278 (IQFWIGAVIFLGMFEKAVFYA) form a helical membrane-spanning segment. Topologically, residues 279 to 305 (EFQNIRYKGESVQNALVLAELLSAVKR) are lumenal. A helical membrane pass occupies residues 306 to 322 (SLARTLVIIVSLGYGIV). Topologically, residues 323–325 (KPR) are cytoplasmic. A helical transmembrane segment spans residues 326–346 (LGVTLHKVVVAGALYLLFSGM). Residues 347–361 (EGVLRVTGAQTDLAS) are Lumenal-facing. Residues 362-382 (LAFIPLAFLDTALCWWIFISL) traverse the membrane as a helical segment. The Cytoplasmic segment spans residues 383–403 (TQTMKLLKLRRNIVKLSLYRH). The helical transmembrane segment at 404–424 (FTNTLILAVAASIVFIIWTTM) threads the bilayer. Residues 425 to 437 (KFRIVTCQSDWRE) are Lumenal-facing. Residues 438–458 (LWVDDAIWRLLFSMILFVIMI) traverse the membrane as a helical segment. At 459–555 (LWRPSANNQR…ITHFERSKME (97 aa)) the chain is on the cytoplasmic side. A disordered region spans residues 491 to 515 (SFEGMKMRSTKQEPNGTSKVNKAQE). Residues 502-511 (QEPNGTSKVN) show a composition bias toward polar residues. S540 carries the phosphoserine modification.

This sequence belongs to the LU7TM family. TMEM87 subfamily. In terms of assembly, may interact with STOML3; STOML3 potentiates the mechanosensitive ion channel activity associated with TMEM87A. In terms of tissue distribution, highly expressed in sensory neurons responsive to mechanical force.

The protein localises to the cell membrane. It localises to the golgi apparatus membrane. The protein resides in the cell projection. Its subcellular location is the ruffle. In terms of biological role, potential monoatomic ion channel gated by mechanical force, implicated in normal touch sensitivity through the generation of mechanically activated currents. However, a direct channel activity is debated and an alternative could be that it functions as a chaperone for an unidentified mechanosensitive ion channel. Could also be involved in cell mechanosensitivity regulating cell adhesion and migration. May also be involved in retrograde transport from endosomes to the trans-Golgi network (TGN). This Mus musculus (Mouse) protein is Transmembrane protein 87A.